The following is a 95-amino-acid chain: MALTLEQVRHVATLARLSLTPEEEQRFTTQLSAVLDAVEQLQSLDVEAVEPTSHATLTSSRLREDVTRPSLPPEKSLANAPAKSDTSFAVPKIIE.

The disordered stretch occupies residues 51 to 95; that stretch reads PTSHATLTSSRLREDVTRPSLPPEKSLANAPAKSDTSFAVPKIIE.

It belongs to the GatC family. In terms of assembly, heterotrimer of A, B and C subunits.

It carries out the reaction L-glutamyl-tRNA(Gln) + L-glutamine + ATP + H2O = L-glutaminyl-tRNA(Gln) + L-glutamate + ADP + phosphate + H(+). It catalyses the reaction L-aspartyl-tRNA(Asn) + L-glutamine + ATP + H2O = L-asparaginyl-tRNA(Asn) + L-glutamate + ADP + phosphate + 2 H(+). Its function is as follows. Allows the formation of correctly charged Asn-tRNA(Asn) or Gln-tRNA(Gln) through the transamidation of misacylated Asp-tRNA(Asn) or Glu-tRNA(Gln) in organisms which lack either or both of asparaginyl-tRNA or glutaminyl-tRNA synthetases. The reaction takes place in the presence of glutamine and ATP through an activated phospho-Asp-tRNA(Asn) or phospho-Glu-tRNA(Gln). In Myxococcus xanthus (strain DK1622), this protein is Aspartyl/glutamyl-tRNA(Asn/Gln) amidotransferase subunit C.